The primary structure comprises 130 residues: S-adenosylmethionine decarboxylase proenzyme (130 aa).

The active-site Schiff-base intermediate with substrate; via pyruvic acid is Ser-78. Ser-78 bears the Pyruvic acid (Ser); by autocatalysis mark. The active-site Proton acceptor; for processing activity is His-83. Cys-98 serves as the catalytic Proton donor; for catalytic activity.

The protein belongs to the prokaryotic AdoMetDC family. Type 1 subfamily. Heterotetramer of two alpha and two beta chains arranged as a dimer of alpha/beta heterodimers. Pyruvate is required as a cofactor. Post-translationally, is synthesized initially as an inactive proenzyme. Formation of the active enzyme involves a self-maturation process in which the active site pyruvoyl group is generated from an internal serine residue via an autocatalytic post-translational modification. Two non-identical subunits are generated from the proenzyme in this reaction, and the pyruvate is formed at the N-terminus of the alpha chain, which is derived from the carboxyl end of the proenzyme. The post-translation cleavage follows an unusual pathway, termed non-hydrolytic serinolysis, in which the side chain hydroxyl group of the serine supplies its oxygen atom to form the C-terminus of the beta chain, while the remainder of the serine residue undergoes an oxidative deamination to produce ammonia and the pyruvoyl group blocking the N-terminus of the alpha chain.

The catalysed reaction is S-adenosyl-L-methionine + H(+) = S-adenosyl 3-(methylsulfanyl)propylamine + CO2. It participates in amine and polyamine biosynthesis; S-adenosylmethioninamine biosynthesis; S-adenosylmethioninamine from S-adenosyl-L-methionine: step 1/1. Catalyzes the decarboxylation of S-adenosylmethionine to S-adenosylmethioninamine (dcAdoMet), the propylamine donor required for the synthesis of the polyamines spermine and spermidine from the diamine putrescine. This Aeropyrum pernix (strain ATCC 700893 / DSM 11879 / JCM 9820 / NBRC 100138 / K1) protein is S-adenosylmethionine decarboxylase proenzyme.